The sequence spans 132 residues: Small ribosomal subunit protein uS8c (132 aa).

This sequence belongs to the universal ribosomal protein uS8 family. In terms of assembly, part of the 30S ribosomal subunit.

The protein resides in the plastid. It localises to the chloroplast. Functionally, one of the primary rRNA binding proteins, it binds directly to 16S rRNA central domain where it helps coordinate assembly of the platform of the 30S subunit. The chain is Small ribosomal subunit protein uS8c (rps8) from Nandina domestica (Heavenly bamboo).